Here is an 88-residue protein sequence, read N- to C-terminus: Small ribosomal subunit protein bS20 (88 aa).

Belongs to the bacterial ribosomal protein bS20 family.

Binds directly to 16S ribosomal RNA. This chain is Small ribosomal subunit protein bS20, found in Nitrobacter winogradskyi (strain ATCC 25391 / DSM 10237 / CIP 104748 / NCIMB 11846 / Nb-255).